We begin with the raw amino-acid sequence, 412 residues long: Subtilisin-like protease 6 (412 aa).

An N-terminal signal peptide occupies residues 1 to 20; the sequence is MGFITKAIPIVLAALSTVNG. The propeptide occupies 21–126; the sequence is ARILEAGPHA…VVRTTTNGTN (106 aa). The Inhibitor I9 domain occupies 36–120; the sequence is KYIVVMKREV…FIEPDFVVRT (85 aa). Asn123 and Asn126 each carry an N-linked (GlcNAc...) asparagine glycan. The Peptidase S8 domain occupies 135-412; it reads SWGLARVGSK…GKLIYNGSGK (278 aa). Catalysis depends on charge relay system residues Asp167 and His198. N-linked (GlcNAc...) asparagine glycans are attached at residues Asn252 and Asn264. The Charge relay system role is filled by Ser358. N-linked (GlcNAc...) asparagine glycosylation occurs at Asn408.

Belongs to the peptidase S8 family.

Its subcellular location is the secreted. In terms of biological role, secreted subtilisin-like serine protease with keratinolytic activity that contributes to pathogenicity. This Trichophyton rubrum (Athlete's foot fungus) protein is Subtilisin-like protease 6 (SUB6).